Reading from the N-terminus, the 326-residue chain is Glyoxylate/hydroxypyruvate reductase B (326 aa).

Catalysis depends on residues R237 and E266. Residue H285 is the Proton donor of the active site.

It belongs to the D-isomer specific 2-hydroxyacid dehydrogenase family. GhrB subfamily. As to quaternary structure, homodimer.

It localises to the cytoplasm. The enzyme catalyses glycolate + NADP(+) = glyoxylate + NADPH + H(+). It carries out the reaction (R)-glycerate + NAD(+) = 3-hydroxypyruvate + NADH + H(+). The catalysed reaction is (R)-glycerate + NADP(+) = 3-hydroxypyruvate + NADPH + H(+). In terms of biological role, catalyzes the NADPH-dependent reduction of glyoxylate and hydroxypyruvate into glycolate and glycerate, respectively. The protein is Glyoxylate/hydroxypyruvate reductase B of Yersinia pseudotuberculosis serotype O:3 (strain YPIII).